A 767-amino-acid polypeptide reads, in one-letter code: Mst2 complex subunit nto1 (767 aa).

The PHD-type 1 zinc-finger motif lies at 194–244; sequence DGRCVICNEAECENSNAIVFCDNCNTSVHQNCYGIPFVPEGQWFCKKCLLA. A C2HC pre-PHD-type zinc finger spans residues 248–281; that stretch reads VICCAFCPDRDGAFCTTLDGRWCHTICAIAIPEI. The segment at 305 to 363 adopts a PHD-type 2 zinc-finger fold; that stretch reads LVCCICKLRWGTCVQCSDKNCYAAYHITCARRAGFFYKIYSHSASYDSVDMETYCDKHT. Polar residues predominate over residues 724–752; sequence VTGQSNHALPNSVTKKNGTKQPYTKNSLP. Positions 724 to 767 are disordered; sequence VTGQSNHALPNSVTKKNGTKQPYTKNSLPFNERITRSKAKKNYS.

As to quaternary structure, component of the mst2 complex composed of at least eaf6, mst2, nto1, pdp3, ptf1, ptf2 and tfg3.

The protein localises to the cytoplasm. Its subcellular location is the nucleus. Component of the mst2 complex which is a highly specific H3 lysine 14 (H3K14) acetyltransferase that functions together with gcn5 to regulate global levels of H3K14 acetylation (H3K14ac), critical for DNA damage checkpoint activation. The polypeptide is Mst2 complex subunit nto1 (nto1) (Schizosaccharomyces pombe (strain 972 / ATCC 24843) (Fission yeast)).